We begin with the raw amino-acid sequence, 225 residues long: UPF0758 protein Shal_0429 (225 aa).

The MPN domain occupies 102–224 (ILSDPDLTRD…IVSFAERGWI (123 aa)). Histidine 173, histidine 175, and aspartate 186 together coordinate Zn(2+). Positions 173-186 (HNHPSGIAEPSTAD) match the JAMM motif motif.

Belongs to the UPF0758 family.

The chain is UPF0758 protein Shal_0429 from Shewanella halifaxensis (strain HAW-EB4).